Reading from the N-terminus, the 348-residue chain is Dihydroorotase (348 aa).

2 residues coordinate Zn(2+): histidine 14 and histidine 16. Substrate is bound by residues 16–18 and asparagine 42; that span reads HLR. Zn(2+)-binding residues include lysine 100, histidine 137, and histidine 175. N6-carboxylysine is present on lysine 100. Histidine 137 contacts substrate. Residue leucine 220 participates in substrate binding. Aspartate 248 serves as a coordination point for Zn(2+). Aspartate 248 is a catalytic residue. The substrate site is built by histidine 252 and alanine 264.

Belongs to the metallo-dependent hydrolases superfamily. DHOase family. Class II DHOase subfamily. Homodimer. It depends on Zn(2+) as a cofactor.

It carries out the reaction (S)-dihydroorotate + H2O = N-carbamoyl-L-aspartate + H(+). It participates in pyrimidine metabolism; UMP biosynthesis via de novo pathway; (S)-dihydroorotate from bicarbonate: step 3/3. Functionally, catalyzes the reversible cyclization of carbamoyl aspartate to dihydroorotate. The sequence is that of Dihydroorotase from Pseudomonas aeruginosa (strain UCBPP-PA14).